Here is a 310-residue protein sequence, read N- to C-terminus: tRNA-cytidine(32) 2-sulfurtransferase (310 aa).

The PP-loop motif motif lies at 45 to 50 (SGGKDS). Cys-120, Cys-123, and Cys-211 together coordinate [4Fe-4S] cluster.

This sequence belongs to the TtcA family. As to quaternary structure, homodimer. Mg(2+) is required as a cofactor. The cofactor is [4Fe-4S] cluster.

The protein localises to the cytoplasm. The catalysed reaction is cytidine(32) in tRNA + S-sulfanyl-L-cysteinyl-[cysteine desulfurase] + AH2 + ATP = 2-thiocytidine(32) in tRNA + L-cysteinyl-[cysteine desulfurase] + A + AMP + diphosphate + H(+). It functions in the pathway tRNA modification. Functionally, catalyzes the ATP-dependent 2-thiolation of cytidine in position 32 of tRNA, to form 2-thiocytidine (s(2)C32). The sulfur atoms are provided by the cysteine/cysteine desulfurase (IscS) system. The sequence is that of tRNA-cytidine(32) 2-sulfurtransferase from Shewanella putrefaciens (strain CN-32 / ATCC BAA-453).